The sequence spans 1026 residues: Multidrug resistance protein MdtC (1026 aa).

11 consecutive transmembrane segments (helical) span residues isoleucine 15–alanine 35, glutamate 333–leucine 353, leucine 360–cysteine 380, leucine 387–leucine 407, valine 431–leucine 451, phenylalanine 463–proline 483, leucine 528–proline 548, leucine 853–serine 873, leucine 897–valine 917, proline 953–glycine 973, and isoleucine 984–valine 1004.

It belongs to the resistance-nodulation-cell division (RND) (TC 2.A.6) family. MdtC subfamily. As to quaternary structure, part of a tripartite efflux system composed of MdtA, MdtB and MdtC. MdtC forms a heteromultimer with MdtB.

Its subcellular location is the cell inner membrane. This chain is Multidrug resistance protein MdtC, found in Salmonella enteritidis PT4 (strain P125109).